We begin with the raw amino-acid sequence, 391 residues long: NADH-quinone oxidoreductase subunit D (391 aa).

It belongs to the complex I 49 kDa subunit family. As to quaternary structure, NDH-1 is composed of 14 different subunits. Subunits NuoB, C, D, E, F, and G constitute the peripheral sector of the complex.

It is found in the cell inner membrane. The enzyme catalyses a quinone + NADH + 5 H(+)(in) = a quinol + NAD(+) + 4 H(+)(out). Its function is as follows. NDH-1 shuttles electrons from NADH, via FMN and iron-sulfur (Fe-S) centers, to quinones in the respiratory chain. The immediate electron acceptor for the enzyme in this species is believed to be ubiquinone. Couples the redox reaction to proton translocation (for every two electrons transferred, four hydrogen ions are translocated across the cytoplasmic membrane), and thus conserves the redox energy in a proton gradient. This Rickettsia akari (strain Hartford) protein is NADH-quinone oxidoreductase subunit D.